We begin with the raw amino-acid sequence, 173 residues long: Large ribosomal subunit protein uL10 (173 aa).

The protein belongs to the universal ribosomal protein uL10 family. In terms of assembly, part of the ribosomal stalk of the 50S ribosomal subunit. The N-terminus interacts with L11 and the large rRNA to form the base of the stalk. The C-terminus forms an elongated spine to which L12 dimers bind in a sequential fashion forming a multimeric L10(L12)X complex.

In terms of biological role, forms part of the ribosomal stalk, playing a central role in the interaction of the ribosome with GTP-bound translation factors. The protein is Large ribosomal subunit protein uL10 of Chloroherpeton thalassium (strain ATCC 35110 / GB-78).